A 1046-amino-acid polypeptide reads, in one-letter code: Suppressor of Mek1 (1046 aa).

The WH1 domain maps to 1-101 (MEPLRKRVKV…QDIWENILQY (101 aa)). A disordered region spans residues 626 to 1046 (FESPETSCNN…SSPTPSELHV (421 aa)). Residues 665-689 (IDEEEEEAYFNRDDDSEDSDDEDEL) are compositionally biased toward acidic residues. Low complexity predominate over residues 695 to 713 (NNNNNNNNNNKQICTNNEN). A compositionally biased stretch (basic and acidic residues) spans 714 to 727 (NMEKNDDNIEKDNE). Residues 743-752 (YEDEDDEDDE) are compositionally biased toward acidic residues. A compositionally biased stretch (basic and acidic residues) spans 753–783 (INKSVESDDIVEKHEIIDKNEKKDEIMKENN). Acidic residues predominate over residues 784 to 803 (DSDNDDNDNNDNDNDNDNNS). Residues 804-820 (DIENKNHLNNNGNNENN) show a composition bias toward low complexity. Composition is skewed to basic and acidic residues over residues 826–855 (VQDKSNNKNNSDKINEDEKIEKQDEMKENL) and 862–876 (EKVKEKQPKDIKKEN). Residues 889 to 905 (SNNSNNNNNNNNNNSNN) are compositionally biased toward low complexity. Residues 909-935 (GDNRKTTPKRKLDYEKNESVVSKKIDK) show a composition bias toward basic and acidic residues. Low complexity predominate over residues 958–995 (NNNNSNNNNNNNNNNNNNNNNNNNNNNNNNNNNNNNQN). A compositionally biased stretch (acidic residues) spans 996 to 1011 (DENELSSASEEEEEQL). Residues 1003-1022 (ASEEEEEQLENGKHIKKFKR) carry the Nuclear localization signal motif. Positions 1028 to 1038 (NNSSNNSNNSS) are enriched in low complexity.

This sequence belongs to the SMEK family. Interacts with ppp4c.

It is found in the cytoplasm. The protein resides in the cell cortex. Its subcellular location is the nucleus. In terms of biological role, suppresses MEK1 null cell polarity, chemotaxis, and gene expression defects. Required for proper cytokinesis during vegetative growth, timely exit from the mound stage during development, and myosin II assembly. May be a regulatory subunit of serine/threonine-protein phosphatase 4 (PP4) and may control localization of PP4 to the nucleus. Involved in the regulation of some ppp4c functions, such as developmental progression, chemotaxis, expression of stress response genes and cell movement. The protein is Suppressor of Mek1 (smkA) of Dictyostelium discoideum (Social amoeba).